We begin with the raw amino-acid sequence, 115 residues long: Cobalt-zinc-cadmium resistance protein CzcI (115 aa).

Residues 1-20 (MRRFVLIFVLLILPFQFSWA) form the signal peptide. Polar residues predominate over residues 93–102 (QHSSEFSSLN). The segment at 93-115 (QHSSEFSSLNARAPDRPQWQRLA) is disordered.

It localises to the periplasm. Its function is as follows. Component of the czc cation-efflux system that confers resistance to cobalt, zinc and cadmium. May have a regulatory function. The polypeptide is Cobalt-zinc-cadmium resistance protein CzcI (czcI) (Cupriavidus metallidurans (strain ATCC 43123 / DSM 2839 / NBRC 102507 / CH34) (Ralstonia metallidurans)).